We begin with the raw amino-acid sequence, 376 residues long: GDSL esterase/lipase At5g55050 (376 aa).

Positions 1–29 (MPTNNTPFLTIFLLFLGLLRFDSFPGLEA) are cleaved as a signal peptide. Ser-46 acts as the Nucleophile in catalysis. Asn-134 and Asn-245 each carry an N-linked (GlcNAc...) asparagine glycan. Catalysis depends on residues Asp-340 and His-344.

The protein belongs to the 'GDSL' lipolytic enzyme family.

The protein resides in the secreted. The protein is GDSL esterase/lipase At5g55050 of Arabidopsis thaliana (Mouse-ear cress).